Consider the following 401-residue polypeptide: Voltage-gated potassium channel subunit beta-3 (401 aa).

Composition is skewed to polar residues over residues 1–14 (MQVS…TLRS) and 32–41 (GVSMAQTKQR). Residues 1–49 (MQVSFACTEQTLRSRTSEDRLCPSRPSGGQNGVSMAQTKQRTPPMGAKN) are disordered. Residues threonine 90, tryptophan 91, glutamine 97, and aspartate 119 each coordinate NADP(+). Catalysis depends on tyrosine 124, which acts as the Proton donor/acceptor. 17 residues coordinate NADP(+): asparagine 192, serine 222, arginine 223, glutamine 248, tryptophan 277, serine 278, proline 279, leucine 280, alanine 281, cysteine 282, lysine 288, arginine 298, glycine 357, serine 359, glutamine 363, glutamate 366, and asparagine 367.

Belongs to the shaker potassium channel beta subunit family. In terms of assembly, forms heteromultimeric complex with alpha subunits. Identified in potassium channel complexes containing KCNA1 and KCNA2.

It is found in the cytoplasm. Its function is as follows. Regulatory subunit of the voltage-gated potassium (Kv) channels composed of pore-forming and potassium-conducting alpha subunits and of regulatory beta subunit. The beta-3/KCNAB3 subunit may mediate closure of potassium channels. Increases and accelerates inactivation of Kv1.1/KCNA1 and Kv2.2/KCNA2 subunit-containing channels. May display nicotinamide adenine dinucleotide phosphate (NADPH)-dependent aldoketoreductase activity. The binding of oxidized and reduced NADP(H) cofactors may be required for the regulation of potassium channel activity. The protein is Voltage-gated potassium channel subunit beta-3 (kcnab3) of Xenopus laevis (African clawed frog).